The chain runs to 268 residues: ELL-associated factor 1 (268 aa).

A disordered region spans residues 106-268 (IQVKKTRAEG…LSESGSDSDD (163 aa)). The segment covering 128–154 (ARPPQPSQPPPPPPPMPFRAPTKPPAG) has biased composition (pro residues). Phosphoserine is present on Ser-165. Over residues 171 to 181 (DDIKRELRAEV) the composition is skewed to basic and acidic residues. The necessary for transactivation activity stretch occupies residues 182–262 (DIIEQMSSSS…LRNDLQLSES (81 aa)). A compositionally biased stretch (low complexity) spans 188–203 (SSSSGSSSSDSESSSG). Over residues 238 to 268 (NGTSRPQGSSQLMNTLRNDLQLSESGSDSDD) the composition is skewed to polar residues.

This sequence belongs to the EAF family. In terms of assembly, component of the super elongation complex (SEC), at least composed of EAF1, EAF2, CDK9, MLLT3/AF9, AFF (AFF1 or AFF4), the P-TEFb complex and ELL (ELL, ELL2 or ELL3). Interacts with ELL and ELL2.

Its subcellular location is the nucleus speckle. It localises to the nucleus. The protein resides in the cajal body. In terms of biological role, acts as a transcriptional transactivator of ELL and ELL2 elongation activities. In Mus musculus (Mouse), this protein is ELL-associated factor 1 (Eaf1).